The chain runs to 401 residues: Beta-ketoadipyl-CoA thiolase (401 aa).

Cys-91 acts as the Acyl-thioester intermediate in catalysis. Catalysis depends on proton acceptor residues His-357 and Cys-387.

This sequence belongs to the thiolase-like superfamily. Thiolase family. In terms of assembly, homotetramer.

It catalyses the reaction succinyl-CoA + acetyl-CoA = 3-oxoadipyl-CoA + CoA. It participates in aromatic compound metabolism; beta-ketoadipate pathway; acetyl-CoA and succinyl-CoA from 3-oxoadipate: step 2/2. Functionally, catalyzes thiolytic cleavage of beta-ketoadipyl-CoA to succinyl-CoA and acetyl-CoA. The chain is Beta-ketoadipyl-CoA thiolase (pcaF) from Pseudomonas knackmussii (strain DSM 6978 / CCUG 54928 / LMG 23759 / B13).